The chain runs to 70 residues: Large ribosomal subunit protein bL31 (70 aa).

It belongs to the bacterial ribosomal protein bL31 family. Type A subfamily. In terms of assembly, part of the 50S ribosomal subunit.

Its function is as follows. Binds the 23S rRNA. In Mycoplasma mobile (strain ATCC 43663 / 163K / NCTC 11711) (Mesomycoplasma mobile), this protein is Large ribosomal subunit protein bL31.